The chain runs to 254 residues: Dihydroorotate dehydrogenase B (NAD(+)), electron transfer subunit (254 aa).

The FAD-binding FR-type domain maps to 1–99; it reads MLQTEMKVIQ…LGPLGKGFDI (99 aa). Residues 50–53, 67–69, and 74–75 contribute to the FAD site; these read RPIS, LYR, and GT. Residues Cys218, Cys223, Cys226, and Cys241 each coordinate [2Fe-2S] cluster.

The protein belongs to the PyrK family. In terms of assembly, heterotetramer of 2 PyrK and 2 PyrD type B subunits. [2Fe-2S] cluster serves as cofactor. FAD is required as a cofactor.

It functions in the pathway pyrimidine metabolism; UMP biosynthesis via de novo pathway; orotate from (S)-dihydroorotate (NAD(+) route): step 1/1. Responsible for channeling the electrons from the oxidation of dihydroorotate from the FMN redox center in the PyrD type B subunit to the ultimate electron acceptor NAD(+). In Listeria monocytogenes serotype 4a (strain HCC23), this protein is Dihydroorotate dehydrogenase B (NAD(+)), electron transfer subunit.